We begin with the raw amino-acid sequence, 368 residues long: Protein mab-21-like (368 aa).

The protein belongs to the mab-21 family.

The protein is Protein mab-21-like of Drosophila pseudoobscura pseudoobscura (Fruit fly).